Here is a 192-residue protein sequence, read N- to C-terminus: MDDVTPDELEAVSVLLRLPNPVFFDQEEEEEDEEEEYDEESVCEDDLEVKSCMQTNENKGKKRKVAEQLMDSDVKDNQYRLMLGKEPVKKMMDALGKTEKLGTKGLNVSVYGPNGENHKMVLKIWIKGTPVLTSGWKNFVKSYKLEKHVDFLTIWMFRHKKTREICFAIDSTRFPVKGTLSKRILQEVFKNP.

Residues 22–44 form a disordered region; it reads VFFDQEEEEEDEEEEYDEESVCE. Positions 25 to 44 are enriched in acidic residues; that stretch reads DQEEEEEDEEEEYDEESVCE. The segment at residues 75 to 173 is a DNA-binding region (TF-B3); sequence KDNQYRLMLG…EICFAIDSTR (99 aa).

The protein resides in the nucleus. In Arabidopsis thaliana (Mouse-ear cress), this protein is Putative B3 domain-containing protein At4g03160.